The chain runs to 339 residues: D-erythrose-4-phosphate dehydrogenase (339 aa).

11–12 serves as a coordination point for NAD(+); that stretch reads RI. Substrate-binding positions include 153–155, Arg199, 212–213, and Arg235; these read SCT and TK. Cys154 acts as the Nucleophile in catalysis. Position 317 (Asn317) interacts with NAD(+).

Belongs to the glyceraldehyde-3-phosphate dehydrogenase family. Epd subfamily. As to quaternary structure, homotetramer.

It is found in the cytoplasm. It catalyses the reaction D-erythrose 4-phosphate + NAD(+) + H2O = 4-phospho-D-erythronate + NADH + 2 H(+). Its pathway is cofactor biosynthesis; pyridoxine 5'-phosphate biosynthesis; pyridoxine 5'-phosphate from D-erythrose 4-phosphate: step 1/5. Functionally, catalyzes the NAD-dependent conversion of D-erythrose 4-phosphate to 4-phosphoerythronate. This is D-erythrose-4-phosphate dehydrogenase from Shewanella frigidimarina (strain NCIMB 400).